The primary structure comprises 211 residues: Pyridoxine/pyridoxamine 5'-phosphate oxidase (211 aa).

Substrate contacts are provided by residues Arg7 to Tyr10 and Lys65. FMN-binding positions include Arg60 to Lys65, Tyr75 to Thr76, Arg81, Lys82, and Gln104. The substrate site is built by Tyr122, Arg126, and Ser130. FMN contacts are provided by residues Gln139–Ser140 and Trp184. Position 190–192 (Arg190–His192) interacts with substrate. Arg194 contacts FMN.

Belongs to the pyridoxamine 5'-phosphate oxidase family. As to quaternary structure, homodimer. FMN serves as cofactor.

It carries out the reaction pyridoxamine 5'-phosphate + O2 + H2O = pyridoxal 5'-phosphate + H2O2 + NH4(+). The enzyme catalyses pyridoxine 5'-phosphate + O2 = pyridoxal 5'-phosphate + H2O2. The protein operates within cofactor metabolism; pyridoxal 5'-phosphate salvage; pyridoxal 5'-phosphate from pyridoxamine 5'-phosphate: step 1/1. It functions in the pathway cofactor metabolism; pyridoxal 5'-phosphate salvage; pyridoxal 5'-phosphate from pyridoxine 5'-phosphate: step 1/1. Functionally, catalyzes the oxidation of either pyridoxine 5'-phosphate (PNP) or pyridoxamine 5'-phosphate (PMP) into pyridoxal 5'-phosphate (PLP). In Aliivibrio salmonicida (strain LFI1238) (Vibrio salmonicida (strain LFI1238)), this protein is Pyridoxine/pyridoxamine 5'-phosphate oxidase.